We begin with the raw amino-acid sequence, 137 residues long: Large ribosomal subunit protein uL16 (137 aa).

Residues 1–20 (MLQPSNRKYRKDFKGRNRGV) are disordered. Basic residues predominate over residues 7–17 (RKYRKDFKGRN).

Belongs to the universal ribosomal protein uL16 family. In terms of assembly, part of the 50S ribosomal subunit.

Its function is as follows. Binds 23S rRNA and is also seen to make contacts with the A and possibly P site tRNAs. The sequence is that of Large ribosomal subunit protein uL16 from Coxiella burnetii (strain CbuK_Q154) (Coxiella burnetii (strain Q154)).